The sequence spans 335 residues: Beta-hexosaminidase (335 aa).

Substrate-binding positions include aspartate 60, arginine 68, arginine 133, and 163–164; that span reads KH. The active-site Proton donor/acceptor is histidine 176. Residue aspartate 247 is the Nucleophile of the active site.

Belongs to the glycosyl hydrolase 3 family. NagZ subfamily.

It is found in the cytoplasm. It catalyses the reaction Hydrolysis of terminal non-reducing N-acetyl-D-hexosamine residues in N-acetyl-beta-D-hexosaminides.. Its pathway is cell wall biogenesis; peptidoglycan recycling. Plays a role in peptidoglycan recycling by cleaving the terminal beta-1,4-linked N-acetylglucosamine (GlcNAc) from peptide-linked peptidoglycan fragments, giving rise to free GlcNAc, anhydro-N-acetylmuramic acid and anhydro-N-acetylmuramic acid-linked peptides. This chain is Beta-hexosaminidase, found in Xylella fastidiosa (strain M12).